We begin with the raw amino-acid sequence, 209 residues long: Imidazole glycerol phosphate synthase subunit HisH (209 aa).

The region spanning 1–205 is the Glutamine amidotransferase type-1 domain; that stretch reads MIAIIDYGMG…KGVVETWKSS (205 aa). Catalysis depends on cysteine 79, which acts as the Nucleophile. Residues histidine 180 and glutamate 182 contribute to the active site.

As to quaternary structure, heterodimer of HisH and HisF.

It is found in the cytoplasm. The catalysed reaction is 5-[(5-phospho-1-deoxy-D-ribulos-1-ylimino)methylamino]-1-(5-phospho-beta-D-ribosyl)imidazole-4-carboxamide + L-glutamine = D-erythro-1-(imidazol-4-yl)glycerol 3-phosphate + 5-amino-1-(5-phospho-beta-D-ribosyl)imidazole-4-carboxamide + L-glutamate + H(+). The enzyme catalyses L-glutamine + H2O = L-glutamate + NH4(+). It functions in the pathway amino-acid biosynthesis; L-histidine biosynthesis; L-histidine from 5-phospho-alpha-D-ribose 1-diphosphate: step 5/9. Functionally, IGPS catalyzes the conversion of PRFAR and glutamine to IGP, AICAR and glutamate. The HisH subunit catalyzes the hydrolysis of glutamine to glutamate and ammonia as part of the synthesis of IGP and AICAR. The resulting ammonia molecule is channeled to the active site of HisF. This Bacillus thuringiensis subsp. konkukian (strain 97-27) protein is Imidazole glycerol phosphate synthase subunit HisH.